We begin with the raw amino-acid sequence, 209 residues long: uncharacterized protein (209 aa).

6 4Fe-4S ferredoxin-type domains span residues K38 to F67, K63 to F92, D90 to P119, K122 to P151, I145 to E174, and L179 to S209. [4Fe-4S] cluster contacts are provided by C47, C50, C53, C57, C72, C75, C78, C82, C99, C102, C105, and C109. Residues C154, C157, C160, C164, C188, C191, C194, and C198 each contribute to the [4Fe-4S] cluster site.

This is an uncharacterized protein from Methanocaldococcus jannaschii (strain ATCC 43067 / DSM 2661 / JAL-1 / JCM 10045 / NBRC 100440) (Methanococcus jannaschii).